Consider the following 581-residue polypeptide: Arginine--tRNA ligase (581 aa).

Residues 126 to 136 carry the 'HIGH' region motif; sequence PNLAKEMHVGH.

It belongs to the class-I aminoacyl-tRNA synthetase family. Monomer.

The protein localises to the cytoplasm. The catalysed reaction is tRNA(Arg) + L-arginine + ATP = L-arginyl-tRNA(Arg) + AMP + diphosphate. The protein is Arginine--tRNA ligase of Shewanella baltica (strain OS223).